A 102-amino-acid polypeptide reads, in one-letter code: Gonadotropin subunit beta-1 (102 aa).

Disulfide bonds link cysteine 8-cysteine 51, cysteine 20-cysteine 65, cysteine 31-cysteine 77, cysteine 35-cysteine 79, and cysteine 82-cysteine 89. The N-linked (GlcNAc...) asparagine glycan is linked to asparagine 12.

This sequence belongs to the glycoprotein hormones subunit beta family. As to quaternary structure, heterodimer of an alpha and a beta chain.

It localises to the secreted. Its function is as follows. Involved in gametogenesis and steroidogenesis. The sequence is that of Gonadotropin subunit beta-1 (cgba) from Thunnus obesus (Bigeye tuna).